The chain runs to 409 residues: Multifunctional CCA protein (409 aa).

Residues glycine 8 and arginine 11 each contribute to the ATP site. CTP-binding residues include glycine 8 and arginine 11. Mg(2+) is bound by residues aspartate 21 and aspartate 23. Arginine 91, arginine 137, and arginine 140 together coordinate ATP. Arginine 91, arginine 137, and arginine 140 together coordinate CTP. The region spanning 228 to 329 (TGVHVLSVLE…LELLQSFDVY (102 aa)) is the HD domain.

This sequence belongs to the tRNA nucleotidyltransferase/poly(A) polymerase family. Bacterial CCA-adding enzyme type 1 subfamily. Monomer. Can also form homodimers and oligomers. The cofactor is Mg(2+). Ni(2+) serves as cofactor.

The catalysed reaction is a tRNA precursor + 2 CTP + ATP = a tRNA with a 3' CCA end + 3 diphosphate. It catalyses the reaction a tRNA with a 3' CCA end + 2 CTP + ATP = a tRNA with a 3' CCACCA end + 3 diphosphate. Its function is as follows. Catalyzes the addition and repair of the essential 3'-terminal CCA sequence in tRNAs without using a nucleic acid template. Adds these three nucleotides in the order of C, C, and A to the tRNA nucleotide-73, using CTP and ATP as substrates and producing inorganic pyrophosphate. tRNA 3'-terminal CCA addition is required both for tRNA processing and repair. Also involved in tRNA surveillance by mediating tandem CCA addition to generate a CCACCA at the 3' terminus of unstable tRNAs. While stable tRNAs receive only 3'-terminal CCA, unstable tRNAs are marked with CCACCA and rapidly degraded. The sequence is that of Multifunctional CCA protein from Pseudomonas savastanoi pv. phaseolicola (strain 1448A / Race 6) (Pseudomonas syringae pv. phaseolicola (strain 1448A / Race 6)).